We begin with the raw amino-acid sequence, 210 residues long: Imidazole glycerol phosphate synthase subunit HisH (210 aa).

Residues 3–210 enclose the Glutamine amidotransferase type-1 domain; that stretch reads TIAIIDYGMG…ILKNFALSKA (208 aa). Cysteine 81 functions as the Nucleophile in the catalytic mechanism. Catalysis depends on residues histidine 190 and glutamate 192.

As to quaternary structure, heterodimer of HisH and HisF.

The protein resides in the cytoplasm. It carries out the reaction 5-[(5-phospho-1-deoxy-D-ribulos-1-ylimino)methylamino]-1-(5-phospho-beta-D-ribosyl)imidazole-4-carboxamide + L-glutamine = D-erythro-1-(imidazol-4-yl)glycerol 3-phosphate + 5-amino-1-(5-phospho-beta-D-ribosyl)imidazole-4-carboxamide + L-glutamate + H(+). The catalysed reaction is L-glutamine + H2O = L-glutamate + NH4(+). It participates in amino-acid biosynthesis; L-histidine biosynthesis; L-histidine from 5-phospho-alpha-D-ribose 1-diphosphate: step 5/9. Functionally, IGPS catalyzes the conversion of PRFAR and glutamine to IGP, AICAR and glutamate. The HisH subunit catalyzes the hydrolysis of glutamine to glutamate and ammonia as part of the synthesis of IGP and AICAR. The resulting ammonia molecule is channeled to the active site of HisF. This is Imidazole glycerol phosphate synthase subunit HisH from Geobacter metallireducens (strain ATCC 53774 / DSM 7210 / GS-15).